Consider the following 213-residue polypeptide: Pyridoxine/pyridoxamine 5'-phosphate oxidase (213 aa).

Residues 8–11 (RREY) and K67 contribute to the substrate site. FMN is bound by residues 62 to 67 (RIVLLK), 77 to 78 (FT), R83, K84, and Q106. Substrate contacts are provided by Y124, R128, and S132. FMN is bound by residues 141–142 (QS) and W186. Residue 192–194 (RLH) participates in substrate binding. R196 provides a ligand contact to FMN.

This sequence belongs to the pyridoxamine 5'-phosphate oxidase family. As to quaternary structure, homodimer. The cofactor is FMN.

The enzyme catalyses pyridoxamine 5'-phosphate + O2 + H2O = pyridoxal 5'-phosphate + H2O2 + NH4(+). The catalysed reaction is pyridoxine 5'-phosphate + O2 = pyridoxal 5'-phosphate + H2O2. Its pathway is cofactor metabolism; pyridoxal 5'-phosphate salvage; pyridoxal 5'-phosphate from pyridoxamine 5'-phosphate: step 1/1. It participates in cofactor metabolism; pyridoxal 5'-phosphate salvage; pyridoxal 5'-phosphate from pyridoxine 5'-phosphate: step 1/1. Functionally, catalyzes the oxidation of either pyridoxine 5'-phosphate (PNP) or pyridoxamine 5'-phosphate (PMP) into pyridoxal 5'-phosphate (PLP). This is Pyridoxine/pyridoxamine 5'-phosphate oxidase from Shewanella sediminis (strain HAW-EB3).